The chain runs to 517 residues: NAD(P)H-quinone oxidoreductase subunit 2 (517 aa).

Helical transmembrane passes span 16–36, 43–63, 80–100, 110–130, 133–153, 168–188, 211–231, 245–265, 279–299, 307–327, 335–355, 379–399, 401–421, and 467–487; these read ILPE…DLIF, WLPY…YLAW, LSIV…LMSI, LAEF…LCGA, LVMI…MTGY, LLIG…LYGL, LGLA…ISAV, PTPV…ALAI, WHFV…VVAL, MLAY…VAGT, VFYL…IILF, LALS…GFFG, IYLF…LGLV, and VGIV…NPLF.

Belongs to the complex I subunit 2 family. NDH-1 can be composed of about 15 different subunits; different subcomplexes with different compositions have been identified which probably have different functions.

The protein localises to the cellular thylakoid membrane. It catalyses the reaction a plastoquinone + NADH + (n+1) H(+)(in) = a plastoquinol + NAD(+) + n H(+)(out). It carries out the reaction a plastoquinone + NADPH + (n+1) H(+)(in) = a plastoquinol + NADP(+) + n H(+)(out). Functionally, NDH-1 shuttles electrons from an unknown electron donor, via FMN and iron-sulfur (Fe-S) centers, to quinones in the respiratory and/or the photosynthetic chain. The immediate electron acceptor for the enzyme in this species is believed to be plastoquinone. Couples the redox reaction to proton translocation, and thus conserves the redox energy in a proton gradient. Cyanobacterial NDH-1 also plays a role in inorganic carbon-concentration. In Rippkaea orientalis (strain PCC 8801 / RF-1) (Cyanothece sp. (strain PCC 8801)), this protein is NAD(P)H-quinone oxidoreductase subunit 2.